Reading from the N-terminus, the 204-residue chain is Uridylate kinase (204 aa).

Residue 26–31 (GAGKGT) coordinates ATP. The NMP stretch occupies residues 46 to 76 (SAGDLLRAEQGRAGSQYGELIKNCIKEGQIV). Residues Arg-52, 74 to 76 (QIV), 104 to 107 (GFPR), and Gln-111 contribute to the a ribonucleoside 5'-phosphate site. The interval 141–151 (ERGKTSGRSDD) is LID. Residue Arg-142 coordinates ATP. Residues Arg-148 and Arg-159 each contribute to the a ribonucleoside 5'-phosphate site. Arg-187 is an ATP binding site.

Belongs to the adenylate kinase family. UMP-CMP kinase subfamily. In terms of assembly, monomer. It depends on Mg(2+) as a cofactor.

Its subcellular location is the cytoplasm. It localises to the nucleus. It carries out the reaction UMP + ATP = UDP + ADP. Its function is as follows. Catalyzes the phosphorylation of pyrimidine nucleoside monophosphates at the expense of ATP. Plays an important role in de novo pyrimidine nucleotide biosynthesis. Has preference for UMP and dUMP as phosphate acceptors, but can also use CMP, dCMP, AMP, GMP, dGMP and dTMP. ATP and dATP are the best phosphate donors, but can also use GTP, dGTP, dCTP, and dTTP to some degree. The polypeptide is Uridylate kinase (Saccharomyces cerevisiae (strain ATCC 204508 / S288c) (Baker's yeast)).